Here is a 196-residue protein sequence, read N- to C-terminus: Small ribosomal subunit protein uS4c (196 aa).

The segment at 15 to 43 is disordered; sequence LGALPGLTRKTPKSGSNQKKKFHSGKKEQ. The region spanning 89-150 is the S4 RNA-binding domain; it reads MRLDNILFRL…NQRSKRLVQN (62 aa).

The protein belongs to the universal ribosomal protein uS4 family. Part of the 30S ribosomal subunit. Contacts protein S5. The interaction surface between S4 and S5 is involved in control of translational fidelity.

The protein resides in the plastid. Its subcellular location is the chloroplast. Functionally, one of the primary rRNA binding proteins, it binds directly to 16S rRNA where it nucleates assembly of the body of the 30S subunit. With S5 and S12 plays an important role in translational accuracy. This Bothriochloa ischaemum (Yellow bluestem) protein is Small ribosomal subunit protein uS4c (rps4).